A 238-amino-acid chain; its full sequence is MRSQQSLEEIAELYGLLENIKKEYEDGIHSVLRKSNPELFSNPHTIPKLKKISINRGLGLAAQNTNILKKSITEFTRITGQKPLITRAKKAVAGFKIREEMELGLSSTLRGEKMYSFLTKLIFFTFAQIRDFRGLSVRSFDKAGNYTFSLKEQLIFPEIEYDDVDQVQGLSITLVLDSSTPKSRSKTVDRVLNGMILLKFLRFPLNDCGYYDKYESFGEITQVWDKKKHLRRKRWSQE.

The protein belongs to the universal ribosomal protein uL5 family. Part of the 50S ribosomal subunit; contacts the 5S rRNA.

It is found in the plastid. Its subcellular location is the chloroplast. Binds 5S rRNA, forms part of the central protuberance of the 50S subunit. This is Large ribosomal subunit protein uL5c (rpl5) from Thalassiosira pseudonana (Marine diatom).